Consider the following 75-residue polypeptide: Large ribosomal subunit protein bL31 (75 aa).

Belongs to the bacterial ribosomal protein bL31 family. Type A subfamily. As to quaternary structure, part of the 50S ribosomal subunit.

Functionally, binds the 23S rRNA. This Acidiphilium cryptum (strain JF-5) protein is Large ribosomal subunit protein bL31.